The following is a 204-amino-acid chain: Small ribosomal subunit protein uS4 (204 aa).

The disordered stretch occupies residues 22–43 (SGKELARRPYAPGDHGNTGRRP). The 61-residue stretch at 94–154 (TRLDSVVFRL…ERSKKIVPIL (61 aa)) folds into the S4 RNA-binding domain.

Belongs to the universal ribosomal protein uS4 family. Part of the 30S ribosomal subunit. Contacts protein S5. The interaction surface between S4 and S5 is involved in control of translational fidelity.

Its function is as follows. One of the primary rRNA binding proteins, it binds directly to 16S rRNA where it nucleates assembly of the body of the 30S subunit. With S5 and S12 plays an important role in translational accuracy. This is Small ribosomal subunit protein uS4 from Oenococcus oeni (strain ATCC BAA-331 / PSU-1).